A 261-amino-acid chain; its full sequence is Global transcriptional regulator CodY (261 aa).

A GAF domain region spans residues 1–159; it reads MPNLLEKTRK…ASTVVGIQLL (159 aa). Positions 207-226 form a DNA-binding region, H-T-H motif; it reads ASVIADRIGITRSVIVNALR.

The protein belongs to the CodY family.

It localises to the cytoplasm. In terms of biological role, DNA-binding global transcriptional regulator which is involved in the adaptive response to starvation and acts by directly or indirectly controlling the expression of numerous genes in response to nutrient availability. During rapid exponential growth, CodY is highly active and represses genes whose products allow adaptation to nutrient depletion. This chain is Global transcriptional regulator CodY, found in Streptococcus agalactiae serotype III (strain NEM316).